We begin with the raw amino-acid sequence, 766 residues long: Transcription factor GTE4 (766 aa).

3 disordered regions span residues 87-108 (GTNS…PGDD), 234-262 (RDTT…PMEE), and 388-412 (GDKL…GDVG). Residues 238 to 250 (DAQQPAGLTSDSA) are compositionally biased toward polar residues. The 107-residue stretch at 416–522 (GAGTKVFKNC…QIFEERWAVI (107 aa)) folds into the Bromo domain. 2 disordered regions span residues 544–606 (TMRS…NKRD) and 687–766 (ARAE…SDQT). Positions 574-589 (PTTTPGRTPTSATPSG) are enriched in low complexity. An NET domain is found at 597 to 678 (PKANEPNKRD…NYKKGLSKKK (82 aa)). Positions 736-766 (SRSSSSSSSSSSSSSSDSDSDSSSSSGSDQT) are enriched in low complexity.

In terms of tissue distribution, ubiquitously expressed.

The protein resides in the nucleus. Involved in the activation and maintenance of cell division in the meristems and by this controls cell numbers in differentiated organs. Its action in cell cycle regulation may be directed through the RB-E2F pathway. In Arabidopsis thaliana (Mouse-ear cress), this protein is Transcription factor GTE4 (GTE4).